A 185-amino-acid polypeptide reads, in one-letter code: Elongation factor P (185 aa).

Belongs to the elongation factor P family.

The protein resides in the cytoplasm. It functions in the pathway protein biosynthesis; polypeptide chain elongation. Its function is as follows. Involved in peptide bond synthesis. Stimulates efficient translation and peptide-bond synthesis on native or reconstituted 70S ribosomes in vitro. Probably functions indirectly by altering the affinity of the ribosome for aminoacyl-tRNA, thus increasing their reactivity as acceptors for peptidyl transferase. In Methylobacillus flagellatus (strain ATCC 51484 / DSM 6875 / VKM B-1610 / KT), this protein is Elongation factor P.